Here is a 347-residue protein sequence, read N- to C-terminus: S-adenosylmethionine:tRNA ribosyltransferase-isomerase (347 aa).

The protein belongs to the QueA family. As to quaternary structure, monomer.

It localises to the cytoplasm. It catalyses the reaction 7-aminomethyl-7-carbaguanosine(34) in tRNA + S-adenosyl-L-methionine = epoxyqueuosine(34) in tRNA + adenine + L-methionine + 2 H(+). The protein operates within tRNA modification; tRNA-queuosine biosynthesis. Functionally, transfers and isomerizes the ribose moiety from AdoMet to the 7-aminomethyl group of 7-deazaguanine (preQ1-tRNA) to give epoxyqueuosine (oQ-tRNA). In Treponema denticola (strain ATCC 35405 / DSM 14222 / CIP 103919 / JCM 8153 / KCTC 15104), this protein is S-adenosylmethionine:tRNA ribosyltransferase-isomerase.